The primary structure comprises 507 residues: Cell cycle serine/threonine-protein kinase hsk1 (507 aa).

S22 carries the phosphoserine modification. One can recognise a Protein kinase domain in the interval 68–433; sequence YRLIEKIGEG…AEEALDHDFL (366 aa). Residues 74 to 82 and K129 each bind ATP; that span reads IGEGTFSSV. D216 acts as the Proton acceptor in catalysis. T291 is subject to Phosphothreonine. The interval 475–507 is disordered; the sequence is FKEQEETDEPTSLSKRKRSIDEILPNDALQDGA. At S493 the chain carries Phosphoserine.

It belongs to the protein kinase superfamily. Ser/Thr protein kinase family. CDC7 subfamily. As to quaternary structure, heterodimer with the regulatory subunit him1/dfp1. May form homooligomeric complexes. Interacts with mcm10. Post-translationally, autophosphorylated. Phosphorylated by cds1 in vitro.

It is found in the nucleus. It carries out the reaction L-seryl-[protein] + ATP = O-phospho-L-seryl-[protein] + ADP + H(+). The enzyme catalyses L-threonyl-[protein] + ATP = O-phospho-L-threonyl-[protein] + ADP + H(+). With respect to regulation, phosphorylation of exogenous substrates activated by Dfp1. In terms of biological role, required for G1/S transition. Plays a role in DNA replication checkpoint signaling through regulating rad3 and cds1. Involved in the maintenance of mitotic chromosome structures during S phase through regulating the function of rad21. Required for initiation of mitotic DNA replication through phosphorylating mcm2/cdc19. Required for genome integrity. In Schizosaccharomyces pombe (strain 972 / ATCC 24843) (Fission yeast), this protein is Cell cycle serine/threonine-protein kinase hsk1 (hsk1).